The chain runs to 527 residues: Peptide chain release factor 3 (527 aa).

The 269-residue stretch at 9–277 (AKRRTFAIIS…CIVDWAPQPL (269 aa)) folds into the tr-type G domain. Residues 18–25 (SHPDAGKT), 86–90 (DTPGH), and 140–143 (NKLD) contribute to the GTP site.

The protein belongs to the TRAFAC class translation factor GTPase superfamily. Classic translation factor GTPase family. PrfC subfamily.

The protein localises to the cytoplasm. Its function is as follows. Increases the formation of ribosomal termination complexes and stimulates activities of RF-1 and RF-2. It binds guanine nucleotides and has strong preference for UGA stop codons. It may interact directly with the ribosome. The stimulation of RF-1 and RF-2 is significantly reduced by GTP and GDP, but not by GMP. This is Peptide chain release factor 3 from Pseudomonas paraeruginosa (strain DSM 24068 / PA7) (Pseudomonas aeruginosa (strain PA7)).